The chain runs to 304 residues: Cell surface-binding protein OPG105 (304 aa).

It belongs to the alpha-carbonic anhydrase family. Homodimer; disulfide-linked. In terms of processing, apparently non-glycosylated.

It is found in the virion membrane. In terms of biological role, binds to chondroitin sulfate on the cell surface to provide virion attachment to target cell. In Monkeypox virus, this protein is Cell surface-binding protein OPG105 (OPG105).